Reading from the N-terminus, the 513-residue chain is Histidine ammonia-lyase (513 aa).

The segment at residues 143 to 145 is a cross-link (5-imidazolinone (Ala-Gly)); it reads ASG. S144 bears the 2,3-didehydroalanine (Ser) mark.

This sequence belongs to the PAL/histidase family. In terms of processing, contains an active site 4-methylidene-imidazol-5-one (MIO), which is formed autocatalytically by cyclization and dehydration of residues Ala-Ser-Gly.

It is found in the cytoplasm. The enzyme catalyses L-histidine = trans-urocanate + NH4(+). It functions in the pathway amino-acid degradation; L-histidine degradation into L-glutamate; N-formimidoyl-L-glutamate from L-histidine: step 1/3. This is Histidine ammonia-lyase from Paracoccus denitrificans (strain Pd 1222).